The primary structure comprises 147 residues: Receptor activity-modifying protein 3 (147 aa).

An N-terminal signal peptide occupies residues 1–22 (MATPAQRLHLLPLLLLLCGECA). The Extracellular segment spans residues 23–112 (QVCGCNETGM…CTVDRTHWED (90 aa)). N-linked (GlcNAc...) asparagine glycosylation is found at N28, N57, N70, and N102. 2 disulfides stabilise this stretch: C39–C71 and C56–C103. A helical membrane pass occupies residues 113–137 (PPDEVLIPLIAVPVLLTVAMAGLVV). The Cytoplasmic segment spans residues 138–147 (WRSKRTDRLL).

It belongs to the RAMP family. Heterodimer of CALCRL and RAMP3; interaction induces allosteric modulation of CALCRL function and ligand specificity for adrenomedullin/ADM and intermedin/ADM2. Heterodimer of CALCR and RAMP3; interaction form the receptor complex AMYR3 for amylin/IAPP. Interacts with GPER1.

It is found in the cell membrane. The protein resides in the membrane. Functionally, accessory protein that interacts with and modulates the function of G-protein coupled receptors including calcitonin gene-related peptide type 1 receptor (CALCRL), calcitonin receptor (CALCR) and G-protein coupled estrogen receptor 1 (GPER1). Required for the transport of CALCRL and GPER1 receptors to the plasma membrane. Plays a role in cardioprotection by reducing cardiac hypertrophy and perivascular fibrosis in a GPER1-dependent manner. Together with CALCRL, form a receptor complex for adrenomedullin/ADM and intermedin/ADM2. Together with CALCR, act as a receptor complex for amylin/IAPP. In Rattus norvegicus (Rat), this protein is Receptor activity-modifying protein 3.